The chain runs to 497 residues: mRNA cleavage and polyadenylation factor CLP1 (497 aa).

The interval 1-20 is disordered; the sequence is MSIPGLGQIAPQQPTTSTTR. Residues E29 and 168–173 each bind ATP; that span reads DSGKTT.

It belongs to the Clp1 family. Clp1 subfamily. As to quaternary structure, component of a pre-mRNA cleavage factor complex. Interacts directly with PCF11.

The protein localises to the nucleus. In terms of biological role, required for endonucleolytic cleavage during polyadenylation-dependent pre-mRNA 3'-end formation. This is mRNA cleavage and polyadenylation factor CLP1 from Chaetomium globosum (strain ATCC 6205 / CBS 148.51 / DSM 1962 / NBRC 6347 / NRRL 1970) (Soil fungus).